The chain runs to 348 residues: 4-hydroxy-2-oxovalerate aldolase (348 aa).

Residues Ile-9–Gln-261 form the Pyruvate carboxyltransferase domain. Substrate is bound at residue Arg-17 to Asp-18. Residue Asp-18 coordinates Mn(2+). The Proton acceptor role is filled by His-21. Substrate contacts are provided by Ser-171 and His-200. Mn(2+)-binding residues include His-200 and His-202. Residue Tyr-291 coordinates substrate.

It belongs to the 4-hydroxy-2-oxovalerate aldolase family.

The enzyme catalyses (S)-4-hydroxy-2-oxopentanoate = acetaldehyde + pyruvate. The polypeptide is 4-hydroxy-2-oxovalerate aldolase (Ralstonia pickettii (strain 12J)).